Reading from the N-terminus, the 201-residue chain is Large ribosomal subunit protein uL4 (201 aa).

Positions A45–S72 are disordered.

This sequence belongs to the universal ribosomal protein uL4 family. In terms of assembly, part of the 50S ribosomal subunit.

Functionally, one of the primary rRNA binding proteins, this protein initially binds near the 5'-end of the 23S rRNA. It is important during the early stages of 50S assembly. It makes multiple contacts with different domains of the 23S rRNA in the assembled 50S subunit and ribosome. In terms of biological role, forms part of the polypeptide exit tunnel. This is Large ribosomal subunit protein uL4 from Shewanella frigidimarina (strain NCIMB 400).